We begin with the raw amino-acid sequence, 185 residues long: Ribosome-recycling factor (185 aa).

The protein belongs to the RRF family.

It localises to the cytoplasm. Responsible for the release of ribosomes from messenger RNA at the termination of protein biosynthesis. May increase the efficiency of translation by recycling ribosomes from one round of translation to another. This chain is Ribosome-recycling factor, found in Clostridium kluyveri (strain NBRC 12016).